Reading from the N-terminus, the 314-residue chain is Malate dehydrogenase (314 aa).

Residues 11-16 (GSGNIG) and D35 each bind NAD(+). Substrate is bound by residues R84 and R90. NAD(+)-binding positions include N97 and 120–122 (ITN). Positions 122 and 153 each coordinate substrate. The Proton acceptor role is filled by H177.

Belongs to the LDH/MDH superfamily. MDH type 3 family.

It catalyses the reaction (S)-malate + NAD(+) = oxaloacetate + NADH + H(+). Catalyzes the reversible oxidation of malate to oxaloacetate. This is Malate dehydrogenase from Rickettsia canadensis (strain McKiel).